The following is a 1310-amino-acid chain: Angiotensin-converting enzyme (1310 aa).

An N-terminal signal peptide occupies residues 1–33 (MGAAPGRRGPRLLRPPPPLLLLLLLLRPPPAAL). Residues 34–1260 (TLDPGLLPGD…GMNLDAQQAR (1227 aa)) lie on the Extracellular side of the membrane. 2 Peptidase M2 domains span residues 45–628 (AADE…LGWP) and 647–1226 (VTDE…LGWP). N-linked (GlcNAc...) asparagine glycans are attached at residues Asn-59, Asn-79, and Asn-151. Cysteines 162 and 170 form a disulfide. Tyr-236 contacts chloride. N-linked (GlcNAc...) asparagine glycosylation is present at Asn-323. Cys-364 and Cys-382 are joined by a disulfide. Residue His-395 coordinates Zn(2+). The Proton acceptor 1 role is filled by Glu-396. 2 residues coordinate Zn(2+): His-399 and Glu-422. N-linked (GlcNAc...) asparagine glycosylation is found at Asn-449 and Asn-513. The Proton donor 1 role is filled by His-524. Arg-533 contributes to the chloride binding site. The cysteines at positions 549 and 561 are disulfide-linked. N-linked (GlcNAc...) asparagine glycosylation is found at Asn-681, Asn-699, and Asn-718. Cys-761 and Cys-767 are joined by a disulfide. Chloride-binding residues include Arg-795 and Tyr-833. N-linked (GlcNAc...) asparagine glycosylation occurs at Asn-946. A disulfide bond links Cys-961 and Cys-979. His-992 is a binding site for Zn(2+). Glu-993 (proton acceptor 2) is an active-site residue. Residues His-996 and Glu-1020 each contribute to the Zn(2+) site. Residues Trp-1094 and Arg-1098 each contribute to the chloride site. Catalysis depends on His-1122, which acts as the Proton donor 2. Arg-1131 is a chloride binding site. A disulfide bridge connects residues Cys-1147 and Cys-1159. N-linked (GlcNAc...) asparagine glycosylation is present at Asn-1195. The interval 1219–1260 (HGEKLGWPQYTWTPNSARSEGSLPDSGRVNFLGMNLDAQQAR) is juxtamembrane stalk. A helical membrane pass occupies residues 1261-1281 (VGQWVLLFLGVALLLASLGLT). Residues 1282-1310 (QRLFSIRYQSLRQPHHGPQFGSEVELRHS) lie on the Cytoplasmic side of the membrane. Ser-1303 carries the post-translational modification Phosphoserine.

Belongs to the peptidase M2 family. As to quaternary structure, monomer and homodimer; homodimerizes following binding to an inhibitor. Interacts with calmodulin (CALM1, CALM2 or CALM3); interaction takes place in the cytoplasmic region and regulates phosphorylation and proteolytic cleavage. Zn(2+) serves as cofactor. Requires chloride as cofactor. In terms of processing, N-glycosylated. Phosphorylated by CK2 on Ser-1303; which allows membrane retention. Phosphorylated on tyrosine residues on its extracellular part, promoting cleavage by secretase enzymes and formation of the soluble form (Angiotensin-converting enzyme, soluble form). Post-translationally, produced following proteolytic cleavage by secretase enzymes that cleave the transmembrane form in the juxtamembrane stalk region upstream of the transmembrane region. Cleavage can take place at different sites of the juxtamembrane stalk region. As to expression, testis-specific isoform is expressed in spermatocytes, adult testis.

It is found in the cell membrane. It localises to the cytoplasm. The protein localises to the secreted. It carries out the reaction Release of a C-terminal dipeptide, oligopeptide-|-Xaa-Yaa, when Xaa is not Pro, and Yaa is neither Asp nor Glu. Thus, conversion of angiotensin I to angiotensin II, with increase in vasoconstrictor activity, but no action on angiotensin II.. The catalysed reaction is angiotensin I + H2O = L-histidyl-L-leucine + angiotensin II. The enzyme catalyses bradykinin + H2O = L-Phe-L-Arg + bradykinin(1-7). It catalyses the reaction substance P + H2O = substance P(1-9) + L-Leu-L-Met-NH2. It carries out the reaction substance P + H2O = substance P(1-8) + Gly-L-Leu-L-Met-NH2. The catalysed reaction is substance P + H2O = L-Phe-L-Phe-Gly-L-Leu-L-Met-NH2 + substance P(1-6). The enzyme catalyses neurotensin + H2O = neurotensin(1-11) + L-isoleucyl-L-leucine. It catalyses the reaction goralatide + H2O = N-acetyl-L-seryl-L-aspartate + L-lysyl-L-proline. It carries out the reaction Met-enkephalin + H2O = L-phenylalanyl-L-methionine + L-tyrosylglycylglycine. The catalysed reaction is Leu-enkephalin + H2O = L-tyrosylglycylglycine + L-phenylalanyl-L-leucine. The enzyme catalyses Met-enkephalin-Arg-Phe + H2O = L-arginyl-L-phenylalanine + Met-enkephalin. Its activity is regulated as follows. The dipeptidyl carboxypeptidase activity is strongly activated by chloride. Specifically inhibited by lisinopril. Inhibited by mixanpril, an orally-active drug used for the treatment of hypertension. Strongly inhibited by lisinopril and captopril. In terms of biological role, dipeptidyl carboxypeptidase that removes dipeptides from the C-terminus of a variety of circulating hormones, such as angiotensin I, bradykinin or enkephalins, thereby playing a key role in the regulation of blood pressure, electrolyte homeostasis or synaptic plasticity. Composed of two similar catalytic domains, each possessing a functional active site, with different selectivity for substrates. Plays a major role in the angiotensin-renin system that regulates blood pressure and sodium retention by the kidney by converting angiotensin I to angiotensin II, resulting in an increase of the vasoconstrictor activity of angiotensin. Also able to inactivate bradykinin, a potent vasodilator, and therefore enhance the blood pressure response. Acts as a regulator of synaptic transmission by mediating cleavage of neuropeptide hormones, such as substance P, neurotensin or enkephalins. Catalyzes degradation of different enkephalin neuropeptides (Met-enkephalin, Leu-enkephalin, Met-enkephalin-Arg-Phe and possibly Met-enkephalin-Arg-Gly-Leu). Acts as a regulator of synaptic plasticity in the nucleus accumbens of the brain by mediating cleavage of Met-enkephalin-Arg-Phe, a strong ligand of Mu-type opioid receptor OPRM1, into Met-enkephalin. Met-enkephalin-Arg-Phe cleavage by ACE decreases activation of OPRM1, leading to long-term synaptic potentiation of glutamate release. Also acts as a regulator of hematopoietic stem cell differentiation by mediating degradation of hemoregulatory peptide N-acetyl-SDKP (AcSDKP). Acts as a regulator of cannabinoid signaling pathway by mediating degradation of hemopressin, an antagonist peptide of the cannabinoid receptor CNR1. Involved in amyloid-beta metabolism by catalyzing degradation of Amyloid-beta protein 40 and Amyloid-beta protein 42 peptides, thereby preventing plaque formation. Catalyzes cleavage of cholecystokinin (maturation of Cholecystokinin-8 and Cholecystokinin-5) and Gonadoliberin-1 (both maturation and degradation) hormones. Degradation of hemoregulatory peptide N-acetyl-SDKP (AcSDKP) and amyloid-beta proteins is mediated by the N-terminal catalytic domain, while angiotensin I and cholecystokinin cleavage is mediated by the C-terminal catalytic region. Its function is as follows. Soluble form that is released in blood plasma and other body fluids following proteolytic cleavage in the juxtamembrane stalk region. Functionally, isoform produced by alternative promoter usage that is specifically expressed in spermatocytes and adult testis, and which is required for male fertility. In contrast to somatic isoforms, only contains one catalytic domain. Acts as a dipeptidyl carboxypeptidase that removes dipeptides from the C-terminus of substrates. The identity of substrates that are needed for male fertility is unknown. May also have a glycosidase activity which releases GPI-anchored proteins from the membrane by cleaving the mannose linkage in the GPI moiety. The GPIase activity was reported to be essential for the egg-binding ability of the sperm. This activity is however unclear and has been challenged by other groups, suggesting that it may be indirect. The protein is Angiotensin-converting enzyme of Oryctolagus cuniculus (Rabbit).